A 143-amino-acid chain; its full sequence is Large ribosomal subunit protein uL11 (143 aa).

This sequence belongs to the universal ribosomal protein uL11 family. Part of the ribosomal stalk of the 50S ribosomal subunit. Interacts with L10 and the large rRNA to form the base of the stalk. L10 forms an elongated spine to which 2 L12 dimers bind in a sequential fashion forming a pentameric L10(L12)2(L12)2 complex. Post-translationally, one or more lysine residues are methylated.

Functionally, forms part of the ribosomal stalk which helps the ribosome interact with GTP-bound translation factors. This Agrobacterium fabrum (strain C58 / ATCC 33970) (Agrobacterium tumefaciens (strain C58)) protein is Large ribosomal subunit protein uL11.